Consider the following 103-residue polypeptide: Protein Rev (103 aa).

S5 carries the phosphoserine; by host CK2 modification. The interval 17–25 (IIKILYQSN) is homomultimerization. Disordered regions lie at residues 24–49 (SNPCPTPAGSRNARKNRRRRWRRRQA) and 82–103 (IRDPEADRLPGTGTVDPGTKDN). The Nuclear localization signal and RNA-binding (RRE) motif lies at 33 to 49 (SRNARKNRRRRWRRRQA). Residues 35-48 (NARKNRRRRWRRRQ) show a composition bias toward basic residues. Positions 72-83 (VDLPPLEQLNIR) match the Nuclear export signal and binding to XPO1 motif.

It belongs to the HIV-1 REV protein family. Homomultimer; when bound to the RRE. Multimeric assembly is essential for activity and may involve XPO1. Binds to human KPNB1, XPO1, TNPO1, RANBP5 and IPO7. Interacts with the viral Integrase. Interacts with human KHDRBS1. Interacts with human NAP1; this interaction decreases Rev multimerization and stimulates its activity. Interacts with human DEAD-box helicases DDX3 and DDX24; these interactions may serve for viral RNA export to the cytoplasm and packaging, respectively. Interacts with human PSIP1; this interaction may inhibit HIV-1 DNA integration by promoting dissociation of the Integrase-LEDGF/p75 complex. Post-translationally, asymmetrically arginine dimethylated at one site by host PRMT6. Methylation impairs the RNA-binding activity and export of viral RNA from the nucleus to the cytoplasm. In terms of processing, phosphorylated by protein kinase CK2. Presence of, and maybe binding to the N-terminus of the regulatory beta subunit of CK2 is necessary for CK2-mediated Rev's phosphorylation.

It localises to the host nucleus. Its subcellular location is the host nucleolus. The protein resides in the host cytoplasm. Escorts unspliced or incompletely spliced viral pre-mRNAs (late transcripts) out of the nucleus of infected cells. These pre-mRNAs carry a recognition sequence called Rev responsive element (RRE) located in the env gene, that is not present in fully spliced viral mRNAs (early transcripts). This function is essential since most viral proteins are translated from unspliced or partially spliced pre-mRNAs which cannot exit the nucleus by the pathway used by fully processed cellular mRNAs. Rev itself is translated from a fully spliced mRNA that readily exits the nucleus. Rev's nuclear localization signal (NLS) binds directly to KPNB1/Importin beta-1 without previous binding to KPNA1/Importin alpha-1. KPNB1 binds to the GDP bound form of RAN (Ran-GDP) and targets Rev to the nucleus. In the nucleus, the conversion from Ran-GDP to Ran-GTP dissociates Rev from KPNB1 and allows Rev's binding to the RRE in viral pre-mRNAs. Rev multimerization on the RRE via cooperative assembly exposes its nuclear export signal (NES) to the surface. Rev can then form a complex with XPO1/CRM1 and Ran-GTP, leading to nuclear export of the complex. Conversion from Ran-GTP to Ran-GDP mediates dissociation of the Rev/RRE/XPO1/RAN complex, so that Rev can return to the nucleus for a subsequent round of export. Beside KPNB1, also seems to interact with TNPO1/Transportin-1, RANBP5/IPO5 and IPO7/RANBP7 for nuclear import. The nucleoporin-like HRB/RIP is an essential cofactor that probably indirectly interacts with Rev to release HIV RNAs from the perinuclear region to the cytoplasm. This Human immunodeficiency virus type 1 group O (isolate MVP5180) (HIV-1) protein is Protein Rev.